Reading from the N-terminus, the 188-residue chain is Elongation factor P (188 aa).

Belongs to the elongation factor P family.

It is found in the cytoplasm. Its pathway is protein biosynthesis; polypeptide chain elongation. In terms of biological role, involved in peptide bond synthesis. Stimulates efficient translation and peptide-bond synthesis on native or reconstituted 70S ribosomes in vitro. Probably functions indirectly by altering the affinity of the ribosome for aminoacyl-tRNA, thus increasing their reactivity as acceptors for peptidyl transferase. This chain is Elongation factor P, found in Cellvibrio japonicus (strain Ueda107) (Pseudomonas fluorescens subsp. cellulosa).